The sequence spans 500 residues: Recombining binding protein suppressor of hairless (500 aa).

A disordered region spans residues 1–30 (MDHTEGSPAEEPPAHAPSPGKFGERPPPKR). DNA-binding stretches follow at residues 57-67 (QKSYGNEKRFF) and 165-170 (SKPSKK). Lysine 175 carries the post-translational modification N6-acetyllysine. The DNA-binding stretch occupies residues 192–197 (RLRSQT). One can recognise an IPT/TIG domain in the interval 355–445 (PVVESLQLNG…YSTSLTFTYT (91 aa)). Residues 465–481 (SSQVPPNESNTNSEGSY) are compositionally biased toward polar residues. A disordered region spans residues 465–500 (SSQVPPNESNTNSEGSYTNASTNSTSVTSSTATVVS). Low complexity predominate over residues 482 to 500 (TNASTNSTSVTSSTATVVS).

This sequence belongs to the Su(H) family. In terms of assembly, interacts with activated NOTCH1, NOTCH2 or NOTCH3. Interacts with MINT/SHARP. This interaction may mediate the recruitment of large corepressor complexes containing proteins such as HDAC1, HDAC2, NCOR2, SAP30, FHL1/KYOT2 and CIR1. Interacts with EP300, MAML1 and PTF1A. Interacts with RITA1/C12orf52, leading to nuclear export, prevent the interaction between RBPJ and NICD product and subsequent down-regulation of the Notch signaling pathway. Interacts with SNW1. Interacts with CHCHD2 and CXXC5. Interacts with BEND6 (via BEN domain). Interacts with NKAPL. Interacts with ZMIZ1. Interacts with RBM15. Interacts with L3MBTL3 and KDM1A; the interaction with KDM1A is weaker in the absence of L3MBTL3 and the interaction with L3MBTL3 is impaired by Notch-derived peptide containing the intracellular domain (NICD). As to quaternary structure, (Microbial infection) Interacts with EBV EBNA2. Interacts with EBV EBNA3. Interacts with EBV EBNA4. Interacts with EBV EBNA6 (via N-terminus).

It is found in the nucleus. The protein localises to the cytoplasm. Functionally, transcriptional regulator that plays a central role in Notch signaling, a signaling pathway involved in cell-cell communication that regulates a broad spectrum of cell-fate determinations. Acts as a transcriptional repressor when it is not associated with Notch proteins. When associated with some NICD product of Notch proteins (Notch intracellular domain), it acts as a transcriptional activator that activates transcription of Notch target genes. Probably represses or activates transcription via the recruitment of chromatin remodeling complexes containing histone deacetylase or histone acetylase proteins, respectively. Specifically binds to the immunoglobulin kappa-type J segment recombination signal sequence. Binds specifically to methylated DNA. Binds to the oxygen responsive element of COX4I2 and activates its transcription under hypoxia conditions (4% oxygen). Negatively regulates the phagocyte oxidative burst in response to bacterial infection by repressing transcription of NADPH oxidase subunits. This Homo sapiens (Human) protein is Recombining binding protein suppressor of hairless.